The following is a 199-amino-acid chain: Protein Maeo_0138 (199 aa).

An AMMECR1 domain is found at 7 to 197; the sequence is EEGKFAVKFA…ELSPNGKIVE (191 aa).

In Methanococcus aeolicus (strain ATCC BAA-1280 / DSM 17508 / OCM 812 / Nankai-3), this protein is Protein Maeo_0138.